A 623-amino-acid polypeptide reads, in one-letter code: Chaperone protein DnaK (623 aa).

A Phosphothreonine; by autocatalysis modification is found at T174. 2 disordered regions span residues I470 to V504 and G578 to K623. The segment covering E481–V504 has biased composition (basic and acidic residues). Low complexity predominate over residues G578–S604. The span at G614–K623 shows a compositional bias: basic and acidic residues.

Belongs to the heat shock protein 70 family.

In terms of biological role, acts as a chaperone. The polypeptide is Chaperone protein DnaK (Lactobacillus gasseri (strain ATCC 33323 / DSM 20243 / BCRC 14619 / CIP 102991 / JCM 1131 / KCTC 3163 / NCIMB 11718 / NCTC 13722 / AM63)).